The sequence spans 271 residues: uncharacterized protein (271 aa).

3 helical membrane passes run 11 to 33 (GWLA…LAPW), 172 to 194 (SINT…LQLI), and 214 to 236 (FLSY…GYFA). The interval 245-271 (REKAGSPPPDKPMTVEQKLADRYGRRR) is disordered. Residues 262-271 (KLADRYGRRR) show a composition bias toward basic and acidic residues.

The protein belongs to the SURF1 family.

The protein localises to the cell membrane. This is an uncharacterized protein from Mycobacterium tuberculosis (strain CDC 1551 / Oshkosh).